The following is a 367-amino-acid chain: Sigma54-dependent transcriptional regulator SfnR (367 aa).

In terms of domain architecture, Sigma-54 factor interaction spans 21–250 (QVFEDPKSQA…LENVIHHTLL (230 aa)). ATP-binding positions include 49 to 56 (GETGTGKE) and 112 to 121 (ADGGTLFLDE).

Involved in the dimethyl sulfide degradation pathway. Activates the expression of sfnG and sfnF. This is Sigma54-dependent transcriptional regulator SfnR from Pseudomonas fluorescens (strain Pf0-1).